The following is a 574-amino-acid chain: Serine/threonine-protein kinase fray1 (574 aa).

Over residues 24 to 41 (NHHDLPDSDSDSSSREEE) the composition is skewed to basic and acidic residues. A disordered region spans residues 24-64 (NHHDLPDSDSDSSSREEELMNSSGGGNGKEPIGEKKKLPSH). A Protein kinase domain is found at 97–357 (YNLIEPIGEG…ASKLLEHKVF (261 aa)). Residues 103–111 (IGEGTEGRV) and Lys-126 each bind ATP. Asp-221 (proton acceptor) is an active-site residue. Position 256 is a phosphothreonine; by autocatalysis (Thr-256). 3 disordered regions span residues 381–447 (YRES…LVNM), 462–514 (LSSG…PEKE), and 532–554 (FGSP…HEHH). Low complexity-rich tracts occupy residues 386–403 (SPAS…PSSP), 418–441 (KNIK…NLSN), and 462–475 (LSSG…SSDL). Positions 478-491 (GHLHKIGTPKKKHS) are enriched in basic residues. A compositionally biased stretch (low complexity) spans 492-506 (PSGSIGDSHGSISPP). Residues 536–553 (KEGDHNHQHHKSEGDHEH) are compositionally biased toward basic and acidic residues.

The protein belongs to the protein kinase superfamily. STE Ser/Thr protein kinase family. STE20 subfamily. Mn(2+) serves as cofactor. Undergoes autophosphorylation in the catalytic domain.

The enzyme catalyses L-seryl-[protein] + ATP = O-phospho-L-seryl-[protein] + ADP + H(+). It carries out the reaction L-threonyl-[protein] + ATP = O-phospho-L-threonyl-[protein] + ADP + H(+). This chain is Serine/threonine-protein kinase fray1, found in Dictyostelium discoideum (Social amoeba).